Here is a 122-residue protein sequence, read N- to C-terminus: MIQMQTNLDVADNSGARRVQCIKVLGGSKRKYASVGDVIVVSVKEAIPRGRVKKGDVRKAVVVRTAKEVRREDGTAIRFDRNAAVILNNNNEPMGTRIFGPVVRELRAKNFMKIISLAPEVL.

The protein belongs to the universal ribosomal protein uL14 family. As to quaternary structure, part of the 50S ribosomal subunit. Forms a cluster with proteins L3 and L19. In the 70S ribosome, L14 and L19 interact and together make contacts with the 16S rRNA in bridges B5 and B8.

In terms of biological role, binds to 23S rRNA. Forms part of two intersubunit bridges in the 70S ribosome. The chain is Large ribosomal subunit protein uL14 from Jannaschia sp. (strain CCS1).